Here is a 305-residue protein sequence, read N- to C-terminus: UPF0450 protein C17orf58 homolog (305 aa).

The first 22 residues, 1 to 22 (MTARALWLLCLIVGWSPEAPVA), serve as a signal peptide directing secretion. The disordered stretch occupies residues 18–160 (EAPVAERKAP…DREPETQSCA (143 aa)). Residues 21–39 (VAERKAPPPHRKPDSRETP) show a composition bias toward basic and acidic residues. Cystine bridges form between C159–C233, C163–C237, and C174–C304. Residues 159–304 (CARACSADAD…QVRGATHTQC (146 aa)) enclose the NTR domain.

The protein belongs to the UPF0450 family.

The chain is UPF0450 protein C17orf58 homolog from Mus musculus (Mouse).